We begin with the raw amino-acid sequence, 589 residues long: Serine/threonine-protein kinase STE7 homolog (589 aa).

Basic and acidic residues predominate over residues 1–18 (MTRTTRIDTQEATKHKDL). 2 disordered regions span residues 1–162 (MTRT…DPDN) and 185–233 (RQHY…ASSQ). The segment covering 24 to 33 (PLSLSSNPNP) has biased composition (low complexity). The span at 57 to 69 (VKSTSGSLRSSDM) shows a compositional bias: polar residues. Positions 92 to 121 (PTASSSATSTPTSNITGSSSASSIQFAQKS) are enriched in low complexity. Composition is skewed to polar residues over residues 127 to 136 (IVSQTLSRPS) and 144 to 162 (SGYSSLNVNQSNRNVDPDN). The segment covering 185 to 203 (RQHYQNSHHHLPTTNRKRQ) has biased composition (basic residues). The segment covering 206-220 (ISSISPTKSSAASSS) has biased composition (low complexity). Polar residues predominate over residues 221–233 (LEPQIQSLPASSQ). A Protein kinase domain is found at 249–565 (LLTLKQLGSG…QLLEDKEHFF (317 aa)). ATP-binding positions include 255-263 (LGSGNSGSV) and K278. D374 functions as the Proton acceptor in the catalytic mechanism. The residue at position 402 (S402) is a Phosphoserine. T408 is subject to Phosphothreonine. The interval 473–499 (IAAERNGQNSPSRSRKNKQKGNGYNSY) is disordered.

The protein belongs to the protein kinase superfamily. STE Ser/Thr protein kinase family. MAP kinase kinase subfamily.

It catalyses the reaction L-seryl-[protein] + ATP = O-phospho-L-seryl-[protein] + ADP + H(+). The enzyme catalyses L-threonyl-[protein] + ATP = O-phospho-L-threonyl-[protein] + ADP + H(+). It carries out the reaction L-tyrosyl-[protein] + ATP = O-phospho-L-tyrosyl-[protein] + ADP + H(+). In Candida albicans (strain SC5314 / ATCC MYA-2876) (Yeast), this protein is Serine/threonine-protein kinase STE7 homolog (HST7).